The chain runs to 255 residues: Electron transfer flavoprotein beta subunit lysine methyltransferase (255 aa).

A mitochondrion-targeting transit peptide spans 1-32 (MAFSLCWKAPRSQWSFLQALNSGFPLFPWRTV).

This sequence belongs to the methyltransferase superfamily. ETFBKMT family. In terms of assembly, interacts with HSPD1; this protein may possibly be a methylation substrate.

The protein resides in the cytoplasm. Its subcellular location is the mitochondrion matrix. It catalyses the reaction L-lysyl-[protein] + 3 S-adenosyl-L-methionine = N(6),N(6),N(6)-trimethyl-L-lysyl-[protein] + 3 S-adenosyl-L-homocysteine + 3 H(+). Functionally, protein-lysine methyltransferase that selectively trimethylates the flavoprotein ETFB in mitochondria. Thereby, may negatively regulate the function of ETFB in electron transfer from Acyl-CoA dehydrogenases to the main respiratory chain. The chain is Electron transfer flavoprotein beta subunit lysine methyltransferase from Rattus norvegicus (Rat).